Reading from the N-terminus, the 221-residue chain is RNA pyrophosphohydrolase (221 aa).

The region spanning 6–149 (GFRPNVGIVL…KRSVYALALT (144 aa)) is the Nudix hydrolase domain. The Nudix box signature appears at 38-59 (GGIDRGETPEQAMFRELHEEVG).

The protein belongs to the Nudix hydrolase family. RppH subfamily. A divalent metal cation is required as a cofactor.

Functionally, accelerates the degradation of transcripts by removing pyrophosphate from the 5'-end of triphosphorylated RNA, leading to a more labile monophosphorylated state that can stimulate subsequent ribonuclease cleavage. The sequence is that of RNA pyrophosphohydrolase from Verminephrobacter eiseniae (strain EF01-2).